The chain runs to 100 residues: Urease subunit gamma (100 aa).

The protein belongs to the urease gamma subunit family. Heterotrimer of UreA (gamma), UreB (beta) and UreC (alpha) subunits. Three heterotrimers associate to form the active enzyme.

It is found in the cytoplasm. It catalyses the reaction urea + 2 H2O + H(+) = hydrogencarbonate + 2 NH4(+). The protein operates within nitrogen metabolism; urea degradation; CO(2) and NH(3) from urea (urease route): step 1/1. This is Urease subunit gamma from Nitrosospira multiformis (strain ATCC 25196 / NCIMB 11849 / C 71).